A 1411-amino-acid polypeptide reads, in one-letter code: Regulating synaptic membrane exocytosis protein 2 (1411 aa).

The segment at 1–33 (MSAPVGPRGRLAPIPAASQPPLQPEMPDLSHLT) is disordered. In terms of domain architecture, RabBD spans 26-185 (MPDLSHLTEE…TKSGAWFYNS (160 aa)). The FYVE-type zinc finger occupies 117 to 173 (KGDAPTCGICHKTKFADGCGHNCSYCQTKFCARCGGRVSLRSNKVMWVCNLCRKQQE). Zn(2+) is bound by residues C123, C126, C139, C142, C147, C150, C165, and C168. Composition is skewed to basic and acidic residues over residues 203-216 (NEEA…KLHE), 273-287 (DQNR…REEY), 318-329 (DSDHLSYRDSNR), 348-366 (RDEY…RYRS), 382-401 (EQMR…RHSD), and 410-434 (EDSR…RRAA). 2 disordered regions span residues 203 to 598 (NEEA…SERQ) and 623 to 650 (SGVD…WQPS). S400 carries the post-translational modification Phosphoserine. Residues 451 to 463 (GPSSYAQRTTNHS) are compositionally biased toward polar residues. Residues 475–492 (DRPDLRRTDSLRKQHHLD) show a composition bias toward basic and acidic residues. Residues 510–521 (RNDSLSSDQSES) are compositionally biased toward polar residues. Over residues 528–537 (KPHKSKKGGK) the composition is skewed to basic residues. Residues 558–568 (SCDDVEIESES) show a composition bias toward acidic residues. Composition is skewed to basic and acidic residues over residues 569 to 583 (VSEK…RKTS) and 634 to 644 (NEEHSHSDKHP). A PDZ domain is found at 668–754 (DGSVPRDSGA…EPQVELVVSR (87 aa)). T689 carries the post-translational modification Phosphothreonine. The tract at residues 762–793 (IPDSTHAQLESSSSSFESQKMDRPSISVTSPM) is disordered. A phosphoserine mark is found at S791 and S794. In terms of domain architecture, C2 1 spans 805–928 (LSGQLSIKLW…ALLDDEPHWY (124 aa)). Disordered regions lie at residues 939 to 973 (PLPH…SEVS) and 993 to 1190 (DLQS…STET). 2 stretches are compositionally biased toward polar residues: residues 994–1015 (LQSS…SPSG) and 1049–1059 (RTMTGHYNTIS). The span at 1060–1113 (RMDRHRVMDDHYSPDRDRDCEAADRQPYHRSRSTEQRPLLERTTTRSRSTERPD) shows a compositional bias: basic and acidic residues. Residues 1143–1153 (GSVQTSPSSTP) show a composition bias toward polar residues. Phosphoserine is present on S1148. Positions 1257–1375 (AMGDIQVGMM…ELSNMVIGWF (119 aa)) constitute a C2 2 domain. A phosphoserine mark is found at S1396 and S1399.

In terms of assembly, interacts with RAB3A and RAB3B that have been activated by GTP-binding. Interacts with RAB3C, RAB3D and RAB26. Interacts with TSPOAP1 and RIMBP2. Interacts with PPFIA3 and PPFIA4. Interacts via its zinc finger with the first C2 domain of UNC13A. Forms a complex consisting of UNC13A, RIMS2 and RAB3A. Heterodimer with PCLO. Part of a ternary complex involving PCLO and EPAC2. In terms of tissue distribution, widely expressed. Expressed in melanocytes. In fetal tissues, predominantly expressed in the brain. In the retina, expressed in the outer plexiform layer (at protein level). In the cerebellum, expressed in Purkinje cells (at protein level). In the pancreas, expressed in Langerhans islets (at protein level).

Its subcellular location is the cell membrane. The protein localises to the synapse. It localises to the presynaptic cell membrane. Its function is as follows. Rab effector involved in exocytosis. May act as scaffold protein. Plays a role in dendrite formation by melanocytes. The chain is Regulating synaptic membrane exocytosis protein 2 (RIMS2) from Homo sapiens (Human).